Consider the following 477-residue polypeptide: MSTAPGLLRQELSCPLCLQLFDAPVTAECGHSFCRACLIRVAGEPADDGTVACPCCQASTRPQALSTNLQLARLVEGLAQVPQGHCEEHLDPLSIYCEQDRTLVCGVCASLGSHRGHRLLPAAEAHARLKTQLPQQKAQLQEACMRKEKSVAVLEHQLVEVEETVRQFRGAVGEQLGKMRMFLAALESSLDREAERVRGEAGVALRRELSSLNSYLEQLRQMEKVLEEVADKPQTEFLMKFCLVTSRLQKILSESPPPARLDIQLPVISDDFKFQVWKKMFRALMPELEELTFDPSSAHPSLVVSASGRRVECSEQKAPPAGEDTCQFDKTVAVVAKQLLSQGEHYWEVEVGDKPRWALGVMAADASRRGRLHAVPSQGLWLLGLRDGKILEAHVEAKEPRALRTPERPPARIGLYLSFADGVLTFYDASNTDALTPLFSFHERLPGPVYPMFDVCWHDKGKNSQPLLLVGPDSEQA.

Zn(2+)-binding residues include C14, C17, C29, H31, C34, C37, C53, C56, C86, H89, C97, D100, C105, C108, H114, and H117. The segment at 14 to 57 (CPLCLQLFDAPVTAECGHSFCRACLIRVAGEPADDGTVACPCCQ) adopts an RING-type zinc-finger fold. Residues 81 to 122 (VPQGHCEEHLDPLSIYCEQDRTLVCGVCASLGSHRGHRLLPA) form a B box-type zinc finger. The stretch at 135–232 (QQKAQLQEAC…EKVLEEVADK (98 aa)) forms a coiled coil. An S-nitrosocysteine modification is found at C144. Phosphoserine is present on S255. A B30.2/SPRY domain is found at 271 to 475 (DFKFQVWKKM…PLLLVGPDSE (205 aa)).

Belongs to the TRIM/RBCC family. As to quaternary structure, homodimer. Homooligomer; disulfide-linked. Oligomerizes on the phospholipid membrane. Interacts with DYSF and CAV3. Post-translationally, disulfide bond formation at Cys-242 occurs in case of membrane damage that cause the entry of the oxidized milieu of the extracellular space, resulting in homooligomerization. In terms of processing, S-nitrosylation at Cys-144 stabilizes TRIM72 and protects against oxidation-induced protein degradation and cell death.

The protein resides in the cell membrane. It localises to the sarcolemma. The protein localises to the cytoplasmic vesicle membrane. The enzyme catalyses S-ubiquitinyl-[E2 ubiquitin-conjugating enzyme]-L-cysteine + [acceptor protein]-L-lysine = [E2 ubiquitin-conjugating enzyme]-L-cysteine + N(6)-ubiquitinyl-[acceptor protein]-L-lysine.. It participates in protein modification; protein ubiquitination. Its activity is regulated as follows. Specifically binds phosphatidylserine. The binding to phospholipids enhances ubiquitination activity. Functionally, muscle-specific E3 ubiquitin-protein ligase that plays a central role in cell membrane repair by nucleating the assembly of the repair machinery at injury sites. Its ubiquitination activity is mediated by E2 ubiquitin-conjugating enzymes UBE2D1, UBE2D2 and UBE2D3. Acts as a sensor of oxidation: upon membrane damage, entry of extracellular oxidative environment results in disulfide bond formation and homooligomerization at the injury site. This oligomerization acts as a nucleation site for recruitment of TRIM72-containing vesicles to the injury site, leading to membrane patch formation. Probably acts upstream of the Ca(2+)-dependent membrane resealing process. Required for transport of DYSF to sites of cell injury during repair patch formation. Regulates membrane budding and exocytosis. May be involved in the regulation of the mobility of KCNB1-containing endocytic vesicles. The sequence is that of Tripartite motif-containing protein 72 from Rattus norvegicus (Rat).